Reading from the N-terminus, the 547-residue chain is Chaperonin GroEL 2 (547 aa).

ATP is bound by residues 30 to 33 (TLGP), K51, 87 to 91 (DGTTT), G415, 479 to 481 (NAA), and D495. A disordered region spans residues 528–547 (KPATAGLPHGGPGGFGGPEF). The segment covering 535–547 (PHGGPGGFGGPEF) has biased composition (gly residues).

This sequence belongs to the chaperonin (HSP60) family. Forms a cylinder of 14 subunits composed of two heptameric rings stacked back-to-back. Interacts with the co-chaperonin GroES.

Its subcellular location is the cytoplasm. The enzyme catalyses ATP + H2O + a folded polypeptide = ADP + phosphate + an unfolded polypeptide.. In terms of biological role, together with its co-chaperonin GroES, plays an essential role in assisting protein folding. The GroEL-GroES system forms a nano-cage that allows encapsulation of the non-native substrate proteins and provides a physical environment optimized to promote and accelerate protein folding. The polypeptide is Chaperonin GroEL 2 (Azoarcus sp. (strain BH72)).